A 400-amino-acid chain; its full sequence is Delta(12) fatty acid desaturase (400 aa).

A helical membrane pass occupies residues Leu-91 to Ala-111. A Histidine box-1 motif is present at residues His-112–His-116. Residues His-148 to His-152 carry the Histidine box-2 motif. A run of 3 helical transmembrane segments spans residues Ile-199–Met-219, Phe-245–Ala-265, and Tyr-277–His-297. A Histidine box-3 motif is present at residues His-339 to His-343.

It belongs to the fatty acid desaturase type 1 family.

It localises to the membrane. It carries out the reaction (9Z)-octadecenoyl-CoA + 2 Fe(II)-[cytochrome b5] + O2 + 2 H(+) = (9Z,12Z)-octadecadienoyl-CoA + 2 Fe(III)-[cytochrome b5] + 2 H2O. It catalyses the reaction (9Z)-hexadecenoyl-CoA + 2 Fe(II)-[cytochrome b5] + O2 + 2 H(+) = (9Z,12Z)-hexadecadienoyl-CoA + 2 Fe(III)-[cytochrome b5] + 2 H2O. The protein operates within lipid metabolism; polyunsaturated fatty acid biosynthesis. In terms of biological role, catalyzes the desaturation of oleic acid (Delta(9)-18:1) to linoleic acid (Delta(9), Delta(12)-18:2). This is Delta(12) fatty acid desaturase from Mortierella isabellina (Filamentous fungus).